Consider the following 450-residue polypeptide: tRNA-2-methylthio-N(6)-dimethylallyladenosine synthase (450 aa).

The region spanning 7–127 is the MTTase N-terminal domain; that stretch reads KRLYIKTYGC…LPELIARAHR (121 aa). Residues C16, C52, C90, C165, C169, and C172 each coordinate [4Fe-4S] cluster. One can recognise a Radical SAM core domain in the interval 151–378; it reads QVSGVSAFLT…NQLLDEQQKA (228 aa). A TRAM domain is found at 381-443; sequence ILQVGKTMPV…KMSLGGVLET (63 aa).

It belongs to the methylthiotransferase family. MiaB subfamily. As to quaternary structure, monomer. The cofactor is [4Fe-4S] cluster.

The protein localises to the cytoplasm. The catalysed reaction is N(6)-dimethylallyladenosine(37) in tRNA + (sulfur carrier)-SH + AH2 + 2 S-adenosyl-L-methionine = 2-methylsulfanyl-N(6)-dimethylallyladenosine(37) in tRNA + (sulfur carrier)-H + 5'-deoxyadenosine + L-methionine + A + S-adenosyl-L-homocysteine + 2 H(+). Catalyzes the methylthiolation of N6-(dimethylallyl)adenosine (i(6)A), leading to the formation of 2-methylthio-N6-(dimethylallyl)adenosine (ms(2)i(6)A) at position 37 in tRNAs that read codons beginning with uridine. The protein is tRNA-2-methylthio-N(6)-dimethylallyladenosine synthase of Caulobacter sp. (strain K31).